Reading from the N-terminus, the 147-residue chain is Acidic phospholipase A2 beta-bungarotoxin A3 chain (147 aa).

The signal sequence occupies residues 1–19 (MYPAHLLVLSAVCVSLLGA). A propeptide spanning residues 20 to 27 (ANIPPHPL) is cleaved from the precursor. Intrachain disulfides connect Cys54–Cys146, Cys56–Cys72, Cys71–Cys127, Cys78–Cys120, Cys88–Cys113, and Cys106–Cys118. Tyr55, Gly57, and Gly59 together coordinate Ca(2+). His75 is an active-site residue. Residue Asp76 participates in Ca(2+) binding. Asp121 is an active-site residue.

Belongs to the phospholipase A2 family. Group I subfamily. D49 sub-subfamily. As to quaternary structure, heterodimer; disulfide-linked. The A chains have phospholipase A2 activity and the B chains show homology with the basic protease inhibitors. The A3 chain is found in beta-5 bungarotoxins. The cofactor is Ca(2+). As to expression, expressed by the venom gland.

The protein localises to the secreted. The enzyme catalyses a 1,2-diacyl-sn-glycero-3-phosphocholine + H2O = a 1-acyl-sn-glycero-3-phosphocholine + a fatty acid + H(+). Its function is as follows. Snake venom phospholipase A2 (PLA2) that inhibits neuromuscular transmission by blocking acetylcholine release from the nerve termini. PLA2 catalyzes the calcium-dependent hydrolysis of the 2-acyl groups in 3-sn-phosphoglycerides. This is Acidic phospholipase A2 beta-bungarotoxin A3 chain from Bungarus multicinctus (Many-banded krait).